The chain runs to 189 residues: Tumor protein p53-inducible protein 11 (189 aa).

Topologically, residues 1 to 63 (MAAKQPPPLM…FAVREPLGLR (63 aa)) are cytoplasmic. Residue Ser-14 is modified to Phosphoserine. The chain crosses the membrane as a helical span at residues 64–84 (VWQFLSAMLFSSVAIMALALP). Over 85–108 (DQLYDAVFDGAEVTSKTPIRLYGG) the chain is Extracellular. A helical transmembrane segment spans residues 109 to 129 (ALLSISLIMWNALYTAEKVII). Residue Arg-130 is a topological domain, cytoplasmic. The chain crosses the membrane as a helical span at residues 131 to 151 (WTLLTEACYFGVQSLVVTATL). The Extracellular segment spans residues 152–155 (AETG). Residues 156-176 (LMSLGTLLLLASRLLFVIVSI) traverse the membrane as a helical segment. The Cytoplasmic portion of the chain corresponds to 177–189 (YYYYQVGRKPKKV).

It is found in the membrane. The polypeptide is Tumor protein p53-inducible protein 11 (Tp53i11) (Rattus norvegicus (Rat)).